Here is a 3371-residue protein sequence, read N- to C-terminus: Protocadherin-23 (3371 aa).

Residues 1-40 (MSPCGRKMGEGRQQRRAPVGKLLLLPGRRDTPHGRSGSSG) are disordered. Over 1 to 46 (MSPCGRKMGEGRQQRRAPVGKLLLLPGRRDTPHGRSGSSGARTQRS) the chain is Cytoplasmic. The helical transmembrane segment at 47-67 (LLWLLVHVWLWAASGSSAQLF) threads the bilayer. Cadherin domains are found at residues 65–167 (QLFN…SPRF), 168–296 (PLDS…PPVF), 297–413 (EQDE…RPAI), 424–539 (ARVS…PPLF), 540–663 (SQQH…EPIF), 664–771 (WRQV…HPVF), 772–881 (NPST…RPKY), 877–979 (ERPK…HPAF), 980–1082 (LRTS…SPSW), 1085–1191 (EHLV…SPTF), 1192–1294 (LHDV…RPFF), 1299–1415 (PGKE…IPEN), 1404–1510 (SQNI…SPSF), 1511–1620 (QDEL…NPTF), 1620–1724 (FISF…APVF), 1725–1829 (KQHL…APEF), 1830–1933 (IVSS…SPSF), 1934–2038 (PTLY…DPVL), 2039–2130 (EQNP…VIHM), 2140–2242 (SHHL…SPCF), 2243–2347 (EQSI…APAF), 2347–2447 (FLPS…PPVF), 2448–2549 (SQDF…APEF), 2550–2665 (TVKS…PPNF), 2666–2769 (SSLS…APQF), 2770–2880 (MFSS…EPIF), and 2881–2988 (TQDQ…TPLA). At 68–2986 (NLTLSVDEGL…NVSFSSEGTP (2919 aa)) the chain is on the extracellular side. 8 N-linked (GlcNAc...) asparagine glycosylation sites follow: asparagine 669, asparagine 772, asparagine 814, asparagine 905, asparagine 966, asparagine 1038, asparagine 1172, and asparagine 1275. 4 N-linked (GlcNAc...) asparagine glycosylation sites follow: asparagine 1487, asparagine 1595, asparagine 1617, and asparagine 1664. N-linked (GlcNAc...) asparagine glycosylation occurs at asparagine 1898. Residues asparagine 2054, asparagine 2070, and asparagine 2098 are each glycosylated (N-linked (GlcNAc...) asparagine). Asparagine 2329 is a glycosylation site (N-linked (GlcNAc...) asparagine). Residues asparagine 2479, asparagine 2497, asparagine 2555, and asparagine 2664 are each glycosylated (N-linked (GlcNAc...) asparagine). N-linked (GlcNAc...) asparagine glycosylation is found at asparagine 2929 and asparagine 2977. A helical transmembrane segment spans residues 2987–3017 (LAVFASSFSISLVVSFLVFLILICILIVMIL). Topologically, residues 3018-3371 (RHKQKDTINN…ELKAEDEVQI (354 aa)) are cytoplasmic. A compositionally biased stretch (basic and acidic residues) spans 3117-3140 (KCSDSALSDHESRVPDSGIPRDSD). The interval 3117–3141 (KCSDSALSDHESRVPDSGIPRDSDQ) is disordered.

Cerebral cortex and testis.

The protein localises to the membrane. In terms of biological role, calcium-dependent cell-adhesion protein. The chain is Protocadherin-23 (DCHS2) from Homo sapiens (Human).